Here is a 304-residue protein sequence, read N- to C-terminus: Porphobilinogen deaminase (304 aa).

Cysteine 240 carries the post-translational modification S-(dipyrrolylmethanemethyl)cysteine.

It belongs to the HMBS family. As to quaternary structure, monomer. Requires dipyrromethane as cofactor.

It catalyses the reaction 4 porphobilinogen + H2O = hydroxymethylbilane + 4 NH4(+). It functions in the pathway porphyrin-containing compound metabolism; protoporphyrin-IX biosynthesis; coproporphyrinogen-III from 5-aminolevulinate: step 2/4. Its function is as follows. Tetrapolymerization of the monopyrrole PBG into the hydroxymethylbilane pre-uroporphyrinogen in several discrete steps. This is Porphobilinogen deaminase from Xanthomonas campestris pv. campestris (strain ATCC 33913 / DSM 3586 / NCPPB 528 / LMG 568 / P 25).